The sequence spans 710 residues: Solute carrier organic anion transporter family member 3A1 (710 aa).

An N-acetylmethionine modification is found at Met1. Over residues 1 to 15 (MQGKKPGGSSGGGRS) the composition is skewed to gly residues. The segment at 1-25 (MQGKKPGGSSGGGRSGELQGDEAQR) is disordered. Residues 1–40 (MQGKKPGGSSGGGRSGELQGDEAQRNKKKKKKVSCFSNIK) are Cytoplasmic-facing. A helical transmembrane segment spans residues 41–60 (IFLVSECALMLAQGTVGAYL). The Extracellular segment spans residues 61 to 79 (VSVLTTLERRFNLQSADVG). Residues 80–100 (VIASSFEIGNLALILFVSYFG) form a helical membrane-spanning segment. Residues 101 to 106 (ARGHRP) lie on the Cytoplasmic side of the membrane. The chain crosses the membrane as a helical span at residues 107-131 (RLIGCGGIVMALGALLSALPEFLTH). Residues 132 to 174 (QYKYEAGEIRWGAEGRDVCATNGSSSDEGPDPDLICRNRTATN) lie on the Extracellular side of the membrane. 2 N-linked (GlcNAc...) asparagine glycosylation sites follow: Asn153 and Asn169. A helical transmembrane segment spans residues 175-203 (MMYLLLIGAQVLLGIGATPVQPLGVSYID). Topologically, residues 204–222 (DHVRRKDSSLYIGILFTML) are cytoplasmic. Residues 223-243 (VFGPACGFILGSFCTKIYVDA) traverse the membrane as a helical segment. Over 244–261 (VFIDTSNLDITPDDPRWI) the chain is Extracellular. Residues 262-286 (GAWWGGFLLCGALLFFSSLLMFGFP) form a helical membrane-spanning segment. At 287–344 (QSLPPHSEPGMESEQAMLPEREYERPKPSNGVLRHPLEPDSSASCFQQLRVIPKVTKH) the chain is on the cytoplasmic side. The helical transmembrane segment at 345–366 (LLSNPVFTCIVLAACMEIAVVA) threads the bilayer. Residues 367-386 (GFAAFLGKYLEQQFNLTTSS) are Extracellular-facing. N-linked (GlcNAc...) asparagine glycosylation occurs at Asn381. The chain crosses the membrane as a helical span at residues 387–410 (ANQLLGMTAIPCACLGIFLGGLLV). The Cytoplasmic segment spans residues 411–414 (KKLS). Residues 415 to 438 (LSALGAIRMAMLVNLVSTACYVSF) traverse the membrane as a helical segment. The Extracellular segment spans residues 439 to 539 (LFLGCDTVPV…PGCQEAFLTF (101 aa)). Asn457 carries an N-linked (GlcNAc...) asparagine glycan. The 49-residue stretch at 465 to 513 (LDPYSPCNNNCECQTDSFTPVCGADGITYLSACFAGCNSTNLTGCACLT) folds into the Kazal-like domain. Disulfide bonds link Cys471/Cys501, Cys477/Cys497, and Cys486/Cys511. Residues Asn502, Asn505, and Asn519 are each glycosylated (N-linked (GlcNAc...) asparagine). A helical transmembrane segment spans residues 540 to 562 (LCVMCVCSLIGAMAQTPSVIILI). Topologically, residues 563-571 (RTVSPELKS) are cytoplasmic. The chain crosses the membrane as a helical span at residues 572 to 597 (YALGVLFLLLRLLGFIPPPLIFGAGI). Residues 598-630 (DSTCLFWSTFCGEQGACVLYDNVVYRYLYVSIA) are Extracellular-facing. A helical membrane pass occupies residues 631–648 (IALKSFAFILYTTTWQCL). Residues 649–705 (RKNYKRYIKNHEGGLSTSEFLASTLTLDNLGRDPVPAHQTHRTKFIYNLEDHEWCEN) are Cytoplasmic-facing.

It belongs to the organo anion transporter (TC 2.A.60) family. In terms of tissue distribution, expressed in many brain regions, including frontal cortex, brain stem and cerebellum. Associated with neuronal bodies in a punctated matter. Detected at the arcuate nucleus and the choroid plexus (at protein level). Little expression, if any, in oligodendrocytes. In the cardiovascular system, detected in cardiac muscle cells and endothelial cells of aorta, coronary artery and left ventricular endocardium (at protein level). In the respiratory system, detected in alveolar epithelial cells and in mucosal epithelium of the trachea (at protein level). In the reproductive system, detected in spermatozoa, oocytes, smooth muscle cells of the ovary, epithelium of the glandula uterine, smooth muscle cells of the myometrium and epithelium of the endometrium (at protein level). In the kidney, detected in afferent and efferent arterioles, and the epithelium of distal tubules and collecting tubules (at protein level).

The protein resides in the basolateral cell membrane. Its subcellular location is the apical cell membrane. It localises to the basal cell membrane. The catalysed reaction is L-thyroxine(out) = L-thyroxine(in). The enzyme catalyses prostaglandin E1(out) = prostaglandin E1(in). It carries out the reaction prostaglandin E2(out) = prostaglandin E2(in). It catalyses the reaction prostaglandin F2alpha(out) = prostaglandin F2alpha(in). The catalysed reaction is (5Z,8Z,11Z,14Z)-eicosatetraenoate(out) = (5Z,8Z,11Z,14Z)-eicosatetraenoate(in). The enzyme catalyses taurocholate(out) = taurocholate(in). It carries out the reaction glycocholate(out) = glycocholate(in). It catalyses the reaction estrone 3-sulfate(out) = estrone 3-sulfate(in). The catalysed reaction is argipressin(out) = argipressin(in). Its function is as follows. Putative organic anion antiporter with apparent broad substrate specificity. Recognizes various substrates including thyroid hormone L-thyroxine, prostanoids such as prostaglandin E1 and E2, bile acids such as taurocholate, glycolate and glycochenodeoxycholate and peptide hormones such as L-arginine vasopressin, likely operating in a tissue-specific manner. The transport mechanism, its electrogenicity and potential tissue-specific counterions remain to be elucidated. The chain is Solute carrier organic anion transporter family member 3A1 (Slco3a1) from Rattus norvegicus (Rat).